The primary structure comprises 310 residues: Transaldolase (310 aa).

Lys124 acts as the Schiff-base intermediate with substrate in catalysis.

Belongs to the transaldolase family. Type 1 subfamily. Homodimer.

The protein resides in the cytoplasm. The catalysed reaction is D-sedoheptulose 7-phosphate + D-glyceraldehyde 3-phosphate = D-erythrose 4-phosphate + beta-D-fructose 6-phosphate. It functions in the pathway carbohydrate degradation; pentose phosphate pathway; D-glyceraldehyde 3-phosphate and beta-D-fructose 6-phosphate from D-ribose 5-phosphate and D-xylulose 5-phosphate (non-oxidative stage): step 2/3. Transaldolase is important for the balance of metabolites in the pentose-phosphate pathway. The chain is Transaldolase from Teredinibacter turnerae (strain ATCC 39867 / T7901).